Here is a 268-residue protein sequence, read N- to C-terminus: Zinc finger protein SNAI2 (268 aa).

Positions 1–20 (MPRSFLVKKHFNASKKPNYS) are SNAG domain. The disordered stretch occupies residues 80–117 (SSSLGRVSPPPPSDTSSKDHSGSESPISDEEERLQSKL). 4 consecutive C2H2-type zinc fingers follow at residues 128 to 150 (FQCNLCNKTYSTFSGLAKHKQLH), 159 to 181 (FSCKYCDKEYVSLGALKMHIRTH), 185 to 207 (CVCKICGKAFSRPWLLQGHIRTH), and 213 to 235 (FSCPHCNRAFADRSNLRAHLQTH). The segment at 241–264 (YQCKNCSKTFSRMSLLHKHEESGC) adopts a C2H2-type 5; atypical zinc-finger fold.

Belongs to the snail C2H2-type zinc-finger protein family. In terms of assembly, interacts (via SNAG domain) with LIMD1 (via LIM domains), WTIP (via LIM domains) and AJUBA (via LIM domains). Interacts (via zinc fingers) with KPNA2, KPNB1, and TNPO1. May interact (via zinc fingers) with IPO7. Post-translationally, phosphorylated by GSK3B. Once phosphorylated, it becomes a target for ubiquitination. In terms of processing, ubiquitinated by the SCF(FBXO11) complex; ubiquitination requires previous GSK3B-mediated SNAI2 phosphorylation. In terms of tissue distribution, expressed in most adult human tissues, including spleen, thymus, prostate, testis, ovary, small intestine, colon, heart, brain, placenta, lung, liver, skeletal muscle, kidney and pancreas. Not detected in peripheral blood leukocyte. Expressed in the dermis and in all layers of the epidermis, with high levels of expression in the basal layers (at protein level). Expressed in osteoblasts (at protein level). Expressed in mesenchymal stem cells (at protein level). Expressed in breast tumor cells (at protein level).

The protein localises to the nucleus. It localises to the cytoplasm. Its function is as follows. Transcriptional repressor that modulates both activator-dependent and basal transcription. Involved in the generation and migration of neural crest cells. Plays a role in mediating RAF1-induced transcriptional repression of the TJ protein, occludin (OCLN) and subsequent oncogenic transformation of epithelial cells. Represses BRCA2 expression by binding to its E2-box-containing silencer and recruiting CTBP1 and HDAC1 in breast cells. In epidermal keratinocytes, binds to the E-box in ITGA3 promoter and represses its transcription. Involved in the regulation of ITGB1 and ITGB4 expression and cell adhesion and proliferation in epidermal keratinocytes. Binds to E-box2 domain of BSG and activates its expression during TGFB1-induced epithelial-mesenchymal transition (EMT) in hepatocytes. Represses E-Cadherin/CDH1 transcription via E-box elements. Involved in osteoblast maturation. Binds to RUNX2 and SOC9 promoters and may act as a positive and negative transcription regulator, respectively, in osteoblasts. Binds to CXCL12 promoter via E-box regions in mesenchymal stem cells and osteoblasts. Plays an essential role in TWIST1-induced EMT and its ability to promote invasion and metastasis. This is Zinc finger protein SNAI2 (SNAI2) from Homo sapiens (Human).